A 548-amino-acid polypeptide reads, in one-letter code: T-complex protein 1 subunit theta (548 aa).

The disordered stretch occupies residues 528 to 548; the sequence is ATGGPKPRGPKQQDEDDDGMA.

This sequence belongs to the TCP-1 chaperonin family. As to quaternary structure, heterooligomeric complex.

Its subcellular location is the cytoplasm. Molecular chaperone; assists the folding of proteins upon ATP hydrolysis. Known to play a role, in vitro, in the folding of actin and tubulin. Required for correct subcellular localization of pgl-1. This is T-complex protein 1 subunit theta from Caenorhabditis briggsae.